The following is a 195-amino-acid chain: Interferon tau (195 aa).

Residues 1–23 (MAFVLSLRMALVLVSYCPGGSLG) form the signal peptide. Intrachain disulfides connect Cys-24–Cys-122 and Cys-52–Cys-162. Asn-101 carries N-linked (GlcNAc...) asparagine glycosylation.

Belongs to the alpha/beta interferon family. IFN-alphaII subfamily. In terms of tissue distribution, constitutively and exclusively expressed in the mononuclear cells of the extraembryonic trophectoderm.

The protein resides in the secreted. Paracrine hormone primarily responsible for maternal recognition of pregnancy. Interacts with endometrial receptors, probably type I interferon receptors, and blocks estrogen receptor expression, preventing the estrogen-induced increase in oxytocin receptor expression in the endometrium. This results in the suppression of the pulsatile endometrial release of the luteolytic hormone prostaglandin F2-alpha, hindering the regression of the corpus luteum (luteolysis) and therefore a return to ovarian cyclicity. This, and a possible direct effect of IFN-tau on prostaglandin synthesis, leads in turn to continued ovarian progesterone secretion, which stimulates the secretion by the endometrium of the nutrients required for the growth of the conceptus. In summary, displays particularly high antiviral and antiproliferative potency concurrently with particular weak cytotoxicity, high antiluteolytic activity and immunomodulatory properties. In contrast with other IFNs, IFN-tau is not virally inducible. This Ovibos moschatus (Muskox) protein is Interferon tau (IFNT).